We begin with the raw amino-acid sequence, 91 residues long: Small ribosomal subunit protein uS19 (91 aa).

Positions Gly72–Lys91 are disordered.

Belongs to the universal ribosomal protein uS19 family.

Its function is as follows. Protein S19 forms a complex with S13 that binds strongly to the 16S ribosomal RNA. This is Small ribosomal subunit protein uS19 from Mycoplasma mobile (strain ATCC 43663 / 163K / NCTC 11711) (Mesomycoplasma mobile).